The sequence spans 213 residues: MYKVALFDLDGTLINSEHKNREAWARLFRRHGVPYDDSVLRSFTGRPAKEAMADHVASFAGHSVDELCAEVAAYAALPDMPAAVTVDGAMELLHQLQQMRVPLGVVTSGPRDYAESALTTLGALQLLDVLITADDVSRGKPDPEGYSTACSALNVEPSQAIVFEDAPAGILAAKRAGIFCVGLTTTHDAEALAEADVLLKDLTEVRWPHIGPS.

The active-site Nucleophile is the aspartate 8. Aspartate 8 and aspartate 10 together coordinate a divalent metal cation. Substrate contacts are provided by residues aspartate 8–aspartate 10, threonine 107–serine 108, and lysine 140. Residue aspartate 10 is the Proton donor of the active site. A divalent metal cation is bound at residue aspartate 165.

It belongs to the HAD-like hydrolase superfamily. CbbY/CbbZ/Gph/YieH family. Requires Mg(2+) as cofactor. It depends on Mn(2+) as a cofactor. Co(2+) serves as cofactor.

It carries out the reaction validoxylamine A 7'-phosphate + H2O = validoxylamine A + phosphate. Involved in the biosynthesis of the antifungal agent validamycin A. Catalyzes the dephosphorylation of validoxylamine A 7'-phosphate to yield validoxylamine A. VldH is also able to convert trehalose 6-phosphate to trehalose. The sequence is that of Validoxylamine A 7'-phosphate phosphatase from Streptomyces hygroscopicus subsp. limoneus.